A 131-amino-acid chain; its full sequence is Ribosomally synthesized cyclic peptide phomopsin precursor gigA (131 aa).

The first 18 residues, 1-18 (MQFTLIFFYATLAAFGLA), serve as a signal peptide directing secretion. Propeptides lie at residues 19-38 (APSE…LDKR), 48-65 (ADLV…LDKR), 75-92 (ADMV…LDKR), 102-119 (ADMV…LAKR), and 129-131 (ADM).

In terms of processing, gigA is processed by several endopeptidases including kexin proteases to produce 2 identical copies of the nonaxapeptide Ile-Asn-Phe-Lys-Ile-Pro-Tyr-Thr-Gly, one copy of the nonaketide Ile-Gly-Phe-Lys-Leu-Pro-Tyr-Arg-Gly and one copy of the nonaketide Pro-Asn-Phe-Lys-Met-Pro-Tyr-Arg-Gly, that are further modified into phomapsins B, C and A, respectively. After being excised from the precursor peptide, the core peptides are cyclized and modified post-translationally by enzymes encoded within the gene cluster. Epichloecyclin biosynthesis requires only dimethylation of the side-chain amino group of the conserved lysine for completion.

Its pathway is mycotoxin biosynthesis. Functionally, ribosomally synthesized cyclic peptide phomopsin precursor; part of the gene cluster that mediates the biosynthesis of the epichloecyclins, a group of nonapeptides, with a likely cyclic structure and dimethylation of the conserved lysine. The gigA translated product contains 4 repeated peptide embedding the nonapeptide Ile-Asn-Phe-Lys-Ile-Pro-Tyr-Thr-Gly in repeats 1 and 2, Ile-Gly-Phe-Lys-Leu-Pro-Tyr-Arg-Gly in repeat 3, and Pro-Asn-Phe-Lys-Met-Pro-Tyr-Arg-Gly in repeat 4 that are converted into epichloecyclins B, C and A, respectively. Moreover, removal of the last Gly residue in epichloecyclins B and C leads to epichloecyclins D and E, respectively. The polypeptide is Ribosomally synthesized cyclic peptide phomopsin precursor gigA (nc25) (Epichloe festucae (strain Fl1)).